The following is a 393-amino-acid chain: Phosphoglycerate kinase (393 aa).

Residues 22 to 24 (DFN), arginine 37, 60 to 63 (HLGR), arginine 119, and arginine 152 each bind substrate. Residues lysine 202, glycine 293, glutamate 324, and 350–353 (GGDS) each bind ATP.

This sequence belongs to the phosphoglycerate kinase family. In terms of assembly, monomer.

The protein localises to the cytoplasm. It carries out the reaction (2R)-3-phosphoglycerate + ATP = (2R)-3-phospho-glyceroyl phosphate + ADP. Its pathway is carbohydrate degradation; glycolysis; pyruvate from D-glyceraldehyde 3-phosphate: step 2/5. The polypeptide is Phosphoglycerate kinase (Borrelia garinii subsp. bavariensis (strain ATCC BAA-2496 / DSM 23469 / PBi) (Borreliella bavariensis)).